The primary structure comprises 86 residues: Small ribosomal subunit protein bS16 (86 aa).

The protein belongs to the bacterial ribosomal protein bS16 family.

The protein is Small ribosomal subunit protein bS16 of Leptothrix cholodnii (strain ATCC 51168 / LMG 8142 / SP-6) (Leptothrix discophora (strain SP-6)).